Here is a 158-residue protein sequence, read N- to C-terminus: Small ribosomal subunit protein uS9 (158 aa).

The protein belongs to the universal ribosomal protein uS9 family.

In Nitrobacter winogradskyi (strain ATCC 25391 / DSM 10237 / CIP 104748 / NCIMB 11846 / Nb-255), this protein is Small ribosomal subunit protein uS9.